The following is a 908-amino-acid chain: Chloride channel protein 2 (908 aa).

Residues 1 to 95 (MAAATAAAAA…RCHKFLVSRV (95 aa)) are Cytoplasmic-facing. Positions 24–42 (QYEQTLMYGRYTQELGAFA) are essential for channel gating by both voltage and cell volume. Thr28 is subject to Phosphothreonine. The tract at residues 44 to 57 (EEAARIRLGGPEPW) is modulates channel gating by both voltage and cell volume. The next 2 membrane-spanning stretches (helical) occupy residues 96 to 129 (GEDW…AQQW) and 138 to 163 (ILLQ…TQIL). The Selectivity filter part_1 motif lies at 169 to 173 (GSGIP). Ser170 is a chloride binding site. The segment at residues 172–179 (IPEMKTIL) is an intramembrane region (helical). Transmembrane regions (helical) follow at residues 188–206 (LTLK…ALGS) and 213–231 (EGPF…SKFL). The short motif at 211–215 (GKEGP) is the Selectivity filter part_2 element. 2 consecutive intramembrane regions (helical) follow at residues 247–259 (MLAA…VGCC) and 263–271 (PIGGVLFSI). 5 consecutive transmembrane segments (helical) span residues 283–303 (YWRG…LAVW), 329–357 (LPAF…VQVM), 366–385 (FLMR…ISTL), 437–457 (ANVF…SALA), and 465–488 (GAFM…MAAW). Positions 465-469 (GAFMP) match the Selectivity filter part_3 motif. Phe467 lines the chloride pocket. Positions 505-519 (GGYAVVGAAALAGAV) form an intramembrane region, helical. The segment at residues 520–521 (TH) is an intramembrane region (note=Loop between two helices). The helical intramembrane region spans 522–533 (TVSTAVIVFELT). The note=Loop between two helices intramembrane region spans 534-538 (GQIAH). Residues 539 to 556 (ILPVMIAVILANAVAQSL) form a helical membrane-spanning segment. Residues 557 to 908 (QPSLYDSIIR…TPSDSDDKCQ (352 aa)) lie on the Cytoplasmic side of the membrane. Tyr561 serves as a coordination point for chloride. The CBS 1 domain occupies 592–650 (MVRDVPHVALSCTFRDLRLALHRTKGRMLALVESPESMILLGSIERSQVVALLGAQLSP). A compositionally biased stretch (basic residues) spans 653–662 (RRQHMQKLRK). The disordered stretch occupies residues 653 to 722 (RRQHMQKLRK…NSTSLQEGTT (70 aa)). The span at 666–680 (SPPSDQESPPSSETS) shows a compositional bias: low complexity. Residues 681–690 (IRFQVNTEDS) are compositionally biased toward polar residues. The span at 698–707 (QTHKPLKPAL) shows a compositional bias: basic residues. The segment covering 711-722 (PSNSTSLQEGTT) has biased composition (polar residues). Ser768 carries the phosphoserine modification. One can recognise a CBS 2 domain in the interval 800-860 (IDPAPFQLVE…GSVTAQGVKV (61 aa)). The Basolateral membrane sorting motif lies at 822 to 823 (LL). Residues 866 to 908 (SFRDSATSSSDTETTEVHALWGPRSRHGLPREGTPSDSDDKCQ) are disordered.

It belongs to the chloride channel (TC 2.A.49) family. ClC-2/CLCN2 subfamily. In terms of assembly, homodimer. Interacts with auxiliary subunit HEPACAM. In terms of processing, phosphorylated. Activated by dephosphorylation. In terms of tissue distribution, expressed in the adrenal gland and brain. Expressed in intestinal epithelium (at protein level). Expressed in salivary gland (at protein level).

Its subcellular location is the cell membrane. It localises to the myelin membrane. The protein resides in the basolateral cell membrane. The protein localises to the cell projection. It is found in the dendritic spine membrane. Its subcellular location is the axon. It carries out the reaction chloride(in) = chloride(out). The enzyme catalyses thiocyanate(in) = thiocyanate(out). It catalyses the reaction bromide(in) = bromide(out). The catalysed reaction is nitrate(in) = nitrate(out). It carries out the reaction iodide(out) = iodide(in). Its activity is regulated as follows. Common gate kinetics are down-regulated by intracellular ATP. Inhibited by AK-42, a derivative of meclofenamate. Inhibited by Cd(2+). Inhibited by Zn(2+) and PKC activation. Inhibited at acidic pH. CCLN2:HEPACAM channel conductance is up-regulated upon hypo-osmolarity. Functionally, voltage-gated and osmosensitive chloride channel. Forms a homodimeric channel where each subunit has its own ion conduction pathway. Conducts double-barreled currents controlled by two types of gates, two fast glutamate gates that control each subunit independently and a slow common gate that opens and shuts off both subunits simultaneously. Displays inward rectification currents activated upon membrane hyperpolarization and extracellular hypotonicity. Contributes to chloride conductance involved in neuron excitability. In hippocampal neurons, generates a significant part of resting membrane conductance and provides an additional chloride efflux pathway to prevent chloride accumulation in dendrites upon GABA receptor activation. In glia, associates with the auxiliary subunit HEPACAM/GlialCAM at astrocytic processes and myelinated fiber tracts where it may regulate transcellular chloride flux buffering extracellular chloride and potassium concentrations. Regulates aldosterone production in adrenal glands. The opening of CLCN2 channels at hyperpolarized membrane potentials in the glomerulosa causes cell membrane depolarization, activation of voltage-gated calcium channels and increased expression of aldosterone synthase, the rate-limiting enzyme for aldosterone biosynthesis. Contributes to chloride conductance in retinal pigment epithelium involved in phagocytosis of shed photoreceptor outer segments and photoreceptor renewal. Conducts chloride currents at the basolateral membrane of epithelial cells with a role in chloride reabsorption rather than secretion. Permeable to small monovalent anions with chloride &gt; thiocyanate &gt; bromide &gt; nitrate &gt; iodide ion selectivity. The protein is Chloride channel protein 2 (Clcn2) of Mus musculus (Mouse).